Reading from the N-terminus, the 271-residue chain is Formamidopyrimidine-DNA glycosylase (271 aa).

Residue proline 2 is the Schiff-base intermediate with DNA of the active site. Catalysis depends on glutamate 3, which acts as the Proton donor. Lysine 57 acts as the Proton donor; for beta-elimination activity in catalysis. DNA-binding residues include histidine 90, arginine 109, and lysine 151. Residues histidine 236–proline 270 form an FPG-type zinc finger. Residue arginine 260 is the Proton donor; for delta-elimination activity of the active site.

Belongs to the FPG family. Monomer. The cofactor is Zn(2+).

The enzyme catalyses Hydrolysis of DNA containing ring-opened 7-methylguanine residues, releasing 2,6-diamino-4-hydroxy-5-(N-methyl)formamidopyrimidine.. It catalyses the reaction 2'-deoxyribonucleotide-(2'-deoxyribose 5'-phosphate)-2'-deoxyribonucleotide-DNA = a 3'-end 2'-deoxyribonucleotide-(2,3-dehydro-2,3-deoxyribose 5'-phosphate)-DNA + a 5'-end 5'-phospho-2'-deoxyribonucleoside-DNA + H(+). Its function is as follows. Involved in base excision repair of DNA damaged by oxidation or by mutagenic agents. Acts as a DNA glycosylase that recognizes and removes damaged bases. Has a preference for oxidized purines, such as 7,8-dihydro-8-oxoguanine (8-oxoG). Has AP (apurinic/apyrimidinic) lyase activity and introduces nicks in the DNA strand. Cleaves the DNA backbone by beta-delta elimination to generate a single-strand break at the site of the removed base with both 3'- and 5'-phosphates. The sequence is that of Formamidopyrimidine-DNA glycosylase from Shewanella loihica (strain ATCC BAA-1088 / PV-4).